The sequence spans 330 residues: Pantothenate kinase (330 aa).

Residue 108-115 (GSVAVGKS) participates in ATP binding.

Belongs to the prokaryotic pantothenate kinase family.

It is found in the cytoplasm. The catalysed reaction is (R)-pantothenate + ATP = (R)-4'-phosphopantothenate + ADP + H(+). The protein operates within cofactor biosynthesis; coenzyme A biosynthesis; CoA from (R)-pantothenate: step 1/5. The sequence is that of Pantothenate kinase from Allorhizobium ampelinum (strain ATCC BAA-846 / DSM 112012 / S4) (Agrobacterium vitis (strain S4)).